The following is a 142-amino-acid chain: Large ribosomal subunit protein uL11 (142 aa).

The protein belongs to the universal ribosomal protein uL11 family. In terms of assembly, part of the ribosomal stalk of the 50S ribosomal subunit. Interacts with L10 and the large rRNA to form the base of the stalk. L10 forms an elongated spine to which L12 dimers bind in a sequential fashion forming a multimeric L10(L12)X complex. Post-translationally, one or more lysine residues are methylated.

Its function is as follows. Forms part of the ribosomal stalk which helps the ribosome interact with GTP-bound translation factors. The chain is Large ribosomal subunit protein uL11 from Nocardioides sp. (strain ATCC BAA-499 / JS614).